We begin with the raw amino-acid sequence, 332 residues long: GTPase Obg (332 aa).

The 159-residue stretch at 1-159 folds into the Obg domain; the sequence is MKFLDQAKIY…RWVWLRLKLI (159 aa). The region spanning 160-328 is the OBG-type G domain; sequence ADAGLVGLPN…VLRETLRMIR (169 aa). GTP-binding positions include 166–173, 191–195, 213–216, 280–283, and 309–311; these read GLPNAGKS, FTTLH, DIPG, NKMD, and SAA. 2 residues coordinate Mg(2+): serine 173 and threonine 193.

This sequence belongs to the TRAFAC class OBG-HflX-like GTPase superfamily. OBG GTPase family. Monomer. The cofactor is Mg(2+).

The protein localises to the cytoplasm. Functionally, an essential GTPase which binds GTP, GDP and possibly (p)ppGpp with moderate affinity, with high nucleotide exchange rates and a fairly low GTP hydrolysis rate. Plays a role in control of the cell cycle, stress response, ribosome biogenesis and in those bacteria that undergo differentiation, in morphogenesis control. The sequence is that of GTPase Obg from Acidiphilium cryptum (strain JF-5).